Here is a 444-residue protein sequence, read N- to C-terminus: Tubulin beta-9 chain (444 aa).

The GTP site is built by Gln11, Glu69, Ser138, Gly142, Thr143, Gly144, Asn204, and Asn226. Glu69 is a Mg(2+) binding site.

The protein belongs to the tubulin family. In terms of assembly, dimer of alpha and beta chains. A typical microtubule is a hollow water-filled tube with an outer diameter of 25 nm and an inner diameter of 15 nM. Alpha-beta heterodimers associate head-to-tail to form protofilaments running lengthwise along the microtubule wall with the beta-tubulin subunit facing the microtubule plus end conferring a structural polarity. Microtubules usually have 13 protofilaments but different protofilament numbers can be found in some organisms and specialized cells. Interacts with TFCA. The cofactor is Mg(2+).

It localises to the cytoplasm. It is found in the cytoskeleton. Tubulin is the major constituent of microtubules, a cylinder consisting of laterally associated linear protofilaments composed of alpha- and beta-tubulin heterodimers. Microtubules grow by the addition of GTP-tubulin dimers to the microtubule end, where a stabilizing cap forms. Below the cap, tubulin dimers are in GDP-bound state, owing to GTPase activity of alpha-tubulin. The chain is Tubulin beta-9 chain (TUBB9) from Arabidopsis thaliana (Mouse-ear cress).